The following is a 62-amino-acid chain: Calmodulin regulator protein PCP4 (62 aa).

A disordered region spans residues M1–T39. The span at G12–E28 shows a compositional bias: basic and acidic residues. The interval E28–E40 is acidic; binds calcium and is required for modulating the calcium-binding kinetics of calmodulin. The IQ domain maps to T39–S62.

It belongs to the PCP4 family. Binds to both calcium-free and calcium-bound calmodulin. The affinity for the calcium-bound form is 50-fold greater.

Functions as a modulator of calcium-binding by calmodulin. Thereby, regulates calmodulin activity and the different processes it controls. For instance, may play a role in neuronal differentiation through activation of calmodulin-dependent kinase signaling pathways. This is Calmodulin regulator protein PCP4 from Homo sapiens (Human).